The following is a 2563-amino-acid chain: Compactin diketide synthase mlcB (2563 aa).

A Ketosynthase family 3 (KS3) domain is found at 29-450; sequence STPIAIVGMG…GSNAHVILES (422 aa). Active-site for beta-ketoacyl synthase activity residues include cysteine 202, histidine 337, and histidine 372. An acyl and malonyl transferase region spans residues 568-915; the sequence is VFTGQGAQWH…TELISKGYGL (348 aa). Serine 658 functions as the For malonyltransferase activity in the catalytic mechanism. Over residues 951–960 the composition is skewed to basic and acidic residues; the sequence is EPRGSRESKQ. Positions 951 to 971 are disordered; it reads EPRGSRESKQRTHPPHTLIGS. An N-terminal hotdog fold region spans residues 966–1103; that stretch reads HTLIGSRESL…GLIRSESERS (138 aa). The region spanning 966-1284 is the PKS/mFAS DH domain; it reads HTLIGSRESL…FQSVGSSFSD (319 aa). The active-site Proton acceptor; for dehydratase activity is histidine 998. The segment at 998–1010 is dehydratase-like; it reads HVVGSSIIFPGAG. Residues 1121 to 1284 form a C-terminal hotdog fold region; the sequence is DNRSIDPNDL…FQSVGSSFSD (164 aa). The active-site Proton donor; for dehydratase activity is the aspartate 1187. The methyltransferase stretch occupies residues 1542–1579; the sequence is YDVVVACQVLHATRCMKRTLSNVRKLLKPGGNLILVET. One can recognise a Carrier domain in the interval 2485–2562; it reads EAISIVLKAM…GLVELVVAKC (78 aa). At serine 2522 the chain carries O-(pantetheine 4'-phosphoryl)serine.

It depends on pantetheine 4'-phosphate as a cofactor.

The catalysed reaction is holo-[2-methylbutanoate polyketide synthase] + 2 malonyl-CoA + S-adenosyl-L-methionine + 2 NADPH + 3 H(+) = (S)-2-methylbutanoyl-[2-methylbutanoate polyketide synthase] + S-adenosyl-L-homocysteine + 2 CO2 + 2 NADP(+) + 2 CoA + H2O. Its pathway is polyketide biosynthesis. Diketide synthase; part of the gene cluster that mediates the biosynthesis of compactin, also known as mevastatin or ML-236B, and which acts as a potent competitive inhibitor of HMG-CoA reductase. Compactin biosynthesis is performed in two stages. The first stage is catalyzed by the nonaketide synthase mlcA, which belongs to type I polyketide synthases and catalyzes the iterative nine-step formation of the polyketide. This PKS stage is completed by the action of dehydrogenase mlcG, which catalyzes the NADPH-dependent reduction of the unsaturated tetra-, penta- and heptaketide intermediates that arise during the mlcA-mediated biosynthesis of the nonaketide chain and leads to dihydro-ML-236C carboxylate. Covalently bound dihydro-ML-236C carboxylate is released from mlcA by the mlcF esterase. Conversion of dihydro-ML-236C carboxylate into ML-236A carboxylate is subsequently performed with the participation of molecular oxygen and P450 monoogygenase mlcC. Finally, mlcH performs the conversion of ML-236A carboxylate to ML-236B/compactin carboxylate through the addition of the side-chain diketide moiety produced by the diketide synthase mlcB. The protein is Compactin diketide synthase mlcB (mlcB) of Penicillium citrinum.